A 269-amino-acid polypeptide reads, in one-letter code: Tryptophan synthase alpha chain (269 aa).

Residues E49 and D60 each act as proton acceptor in the active site.

It belongs to the TrpA family. Tetramer of two alpha and two beta chains.

The enzyme catalyses (1S,2R)-1-C-(indol-3-yl)glycerol 3-phosphate + L-serine = D-glyceraldehyde 3-phosphate + L-tryptophan + H2O. The protein operates within amino-acid biosynthesis; L-tryptophan biosynthesis; L-tryptophan from chorismate: step 5/5. Functionally, the alpha subunit is responsible for the aldol cleavage of indoleglycerol phosphate to indole and glyceraldehyde 3-phosphate. The sequence is that of Tryptophan synthase alpha chain from Buchnera aphidicola subsp. Schlechtendalia chinensis.